The primary structure comprises 129 residues: Ribonuclease P protein component (129 aa).

The protein belongs to the RnpA family. Consists of a catalytic RNA component (M1 or rnpB) and a protein subunit.

It catalyses the reaction Endonucleolytic cleavage of RNA, removing 5'-extranucleotides from tRNA precursor.. Functionally, RNaseP catalyzes the removal of the 5'-leader sequence from pre-tRNA to produce the mature 5'-terminus. It can also cleave other RNA substrates such as 4.5S RNA. The protein component plays an auxiliary but essential role in vivo by binding to the 5'-leader sequence and broadening the substrate specificity of the ribozyme. The protein is Ribonuclease P protein component of Prochlorococcus marinus (strain MIT 9515).